Here is a 317-residue protein sequence, read N- to C-terminus: Transaldolase (317 aa).

Lys-125 (schiff-base intermediate with substrate) is an active-site residue.

It belongs to the transaldolase family. Type 1 subfamily. Homodimer.

The protein resides in the cytoplasm. It catalyses the reaction D-sedoheptulose 7-phosphate + D-glyceraldehyde 3-phosphate = D-erythrose 4-phosphate + beta-D-fructose 6-phosphate. It functions in the pathway carbohydrate degradation; pentose phosphate pathway; D-glyceraldehyde 3-phosphate and beta-D-fructose 6-phosphate from D-ribose 5-phosphate and D-xylulose 5-phosphate (non-oxidative stage): step 2/3. Transaldolase is important for the balance of metabolites in the pentose-phosphate pathway. The sequence is that of Transaldolase from Delftia acidovorans (strain DSM 14801 / SPH-1).